A 364-amino-acid chain; its full sequence is Dihydroorotate dehydrogenase (quinone) (364 aa).

FMN is bound by residues 61-65 and Thr-85; that span reads AGFDK. Position 65 (Lys-65) interacts with substrate. Substrate is bound at residue 110 to 114; sequence NRMGF. Residues Asn-139 and Asn-170 each contribute to the FMN site. Asn-170 provides a ligand contact to substrate. Ser-173 (nucleophile) is an active-site residue. Position 175 (Asn-175) interacts with substrate. FMN is bound by residues Lys-214 and Ala-242. 243–244 lines the substrate pocket; that stretch reads NT. FMN contacts are provided by residues Gly-266, Gly-295, and 316–317; that span reads YS.

This sequence belongs to the dihydroorotate dehydrogenase family. Type 2 subfamily. As to quaternary structure, monomer. Requires FMN as cofactor.

The protein resides in the cell membrane. It carries out the reaction (S)-dihydroorotate + a quinone = orotate + a quinol. It participates in pyrimidine metabolism; UMP biosynthesis via de novo pathway; orotate from (S)-dihydroorotate (quinone route): step 1/1. Its function is as follows. Catalyzes the conversion of dihydroorotate to orotate with quinone as electron acceptor. The protein is Dihydroorotate dehydrogenase (quinone) of Rhodopseudomonas palustris (strain BisB5).